Reading from the N-terminus, the 175-residue chain is MSTTTTQKSSYTREDLLACAHGELFGPNNARLPLPNMLMMDRITHISDQGGKYGKGEIIAELDIHPDLWFFDCHFESDPVMPGCLGLDATWQLLGFFLGWVGNPGRGRALGVGNVKFSGQVLPTAKKLTYRIDLKRVISRKLVLGLADATVSVDGKDIYQADDLKVGLFTSTDGF.

Residue His-74 is part of the active site.

This sequence belongs to the thioester dehydratase family. FabA subfamily. In terms of assembly, homodimer.

The protein resides in the cytoplasm. It carries out the reaction a (3R)-hydroxyacyl-[ACP] = a (2E)-enoyl-[ACP] + H2O. The enzyme catalyses (3R)-hydroxydecanoyl-[ACP] = (2E)-decenoyl-[ACP] + H2O. The catalysed reaction is (2E)-decenoyl-[ACP] = (3Z)-decenoyl-[ACP]. It participates in lipid metabolism; fatty acid biosynthesis. Functionally, necessary for the introduction of cis unsaturation into fatty acids. Catalyzes the dehydration of (3R)-3-hydroxydecanoyl-ACP to E-(2)-decenoyl-ACP and then its isomerization to Z-(3)-decenoyl-ACP. Can catalyze the dehydratase reaction for beta-hydroxyacyl-ACPs with saturated chain lengths up to 16:0, being most active on intermediate chain length. This chain is 3-hydroxydecanoyl-[acyl-carrier-protein] dehydratase, found in Alcanivorax borkumensis (strain ATCC 700651 / DSM 11573 / NCIMB 13689 / SK2).